The following is a 984-amino-acid chain: E3 ubiquitin-protein ligase BRE1A (984 aa).

The tract at residues 1–34 (MSGAGNKRAAGEPGPSAPPEKKAGVEDSGTTVET) is disordered. A coiled-coil region spans residues 43 to 90 (TEELDIRTLQTKNRKLAEMLDQRQAIEDELREHIEKLERRQATDDASL). A disordered region spans residues 128–150 (VVPEPEPDSDSNQERKDERERGE). Basic and acidic residues predominate over residues 139–150 (NQERKDERERGE). Coiled-coil stretches lie at residues 236–378 (ADTL…VKET) and 429–907 (SLHK…TTKK). The disordered stretch occupies residues 506–632 (SDLSKIRSRS…KHEDGRKKEA (127 aa)). Over residues 514–526 (RSGSALLQSQSST) the composition is skewed to polar residues. Composition is skewed to basic and acidic residues over residues 527–540 (EDTK…KQEP) and 558–632 (SEVK…KKEA). The RING-type zinc finger occupies 931–970 (CPCCNMRKKDAVLTKCFHVFCFECVKTRYDTRQRKCPKCN).

It belongs to the BRE1 family. As to quaternary structure, component of the RNF20/40 complex (also known as BRE1 complex).

It localises to the nucleus. It catalyses the reaction S-ubiquitinyl-[E2 ubiquitin-conjugating enzyme]-L-cysteine + [acceptor protein]-L-lysine = [E2 ubiquitin-conjugating enzyme]-L-cysteine + N(6)-ubiquitinyl-[acceptor protein]-L-lysine.. It functions in the pathway protein modification; protein ubiquitination. Its function is as follows. Component of the RNF20/40 E3 ubiquitin-protein ligase complex that mediates monoubiquitination of 'Lys-120' of histone H2B (H2BK120ub1). H2BK120ub1 gives a specific tag for epigenetic transcriptional activation and is also prerequisite for histone H3 'Lys-4' and 'Lys-79' methylation (H3K4me and H3K79me, respectively). The protein is E3 ubiquitin-protein ligase BRE1A (RNF20) of Gallus gallus (Chicken).